We begin with the raw amino-acid sequence, 121 residues long: Ribosome-binding factor A (121 aa).

The protein belongs to the RbfA family. As to quaternary structure, monomer. Binds 30S ribosomal subunits, but not 50S ribosomal subunits or 70S ribosomes.

It is found in the cytoplasm. One of several proteins that assist in the late maturation steps of the functional core of the 30S ribosomal subunit. Associates with free 30S ribosomal subunits (but not with 30S subunits that are part of 70S ribosomes or polysomes). Required for efficient processing of 16S rRNA. May interact with the 5'-terminal helix region of 16S rRNA. In Lactobacillus helveticus (strain DPC 4571), this protein is Ribosome-binding factor A.